The chain runs to 219 residues: Probable GTP-binding protein EngB (219 aa).

One can recognise an EngB-type G domain in the interval 31-205 (VGVEIAFAGR…LSILNEWCHP (175 aa)). GTP-binding positions include 39–46 (GRSNAGKS), 66–70 (GRTQL), 84–87 (DLPG), 151–154 (TKSD), and 184–186 (FSA). Mg(2+) is bound by residues Ser46 and Thr68.

It belongs to the TRAFAC class TrmE-Era-EngA-EngB-Septin-like GTPase superfamily. EngB GTPase family. Requires Mg(2+) as cofactor.

In terms of biological role, necessary for normal cell division and for the maintenance of normal septation. The sequence is that of Probable GTP-binding protein EngB from Shewanella putrefaciens (strain CN-32 / ATCC BAA-453).